Reading from the N-terminus, the 141-residue chain is Putative antiporter subunit mnhB2 (141 aa).

Helical transmembrane passes span 10–30, 35–55, 70–90, and 114–134; these read TVTK…FFAG, GGGF…FLAF, ILMI…TFFG, and ITLF…TVML.

It belongs to the CPA3 antiporters (TC 2.A.63) subunit B family. In terms of assembly, may form a heterooligomeric complex that consists of seven subunits: mnhA2, mnhB2, mnhC2, mnhD2, mnhE2, mnhF2 and mnhG2.

Its subcellular location is the cell membrane. In Staphylococcus aureus (strain MRSA252), this protein is Putative antiporter subunit mnhB2 (mnhB2).